The following is a 537-amino-acid chain: ATP synthase subunit beta (537 aa).

The segment at M1–G61 is disordered. A compositionally biased stretch (basic and acidic residues) spans S7–K18. Over residues N44–Q55 the composition is skewed to polar residues. G209–T216 provides a ligand contact to ATP.

It belongs to the ATPase alpha/beta chains family. As to quaternary structure, F-type ATPases have 2 components, CF(1) - the catalytic core - and CF(0) - the membrane proton channel. CF(1) has five subunits: alpha(3), beta(3), gamma(1), delta(1), epsilon(1). CF(0) has three main subunits: a(1), b(2) and c(9-12). The alpha and beta chains form an alternating ring which encloses part of the gamma chain. CF(1) is attached to CF(0) by a central stalk formed by the gamma and epsilon chains, while a peripheral stalk is formed by the delta and b chains.

The protein resides in the cell inner membrane. It catalyses the reaction ATP + H2O + 4 H(+)(in) = ADP + phosphate + 5 H(+)(out). Its function is as follows. Produces ATP from ADP in the presence of a proton gradient across the membrane. The catalytic sites are hosted primarily by the beta subunits. In Bartonella bacilliformis (strain ATCC 35685 / KC583 / Herrer 020/F12,63), this protein is ATP synthase subunit beta.